We begin with the raw amino-acid sequence, 830 residues long: Formin-like protein 14 (830 aa).

Residues 1–34 (MAMAMAMPSSSPPLFFSLLNLMLLLLLLAPYCSA) form the signal peptide. A compositionally biased stretch (polar residues) spans 40-59 (NNTHHRSSSPTQTTLQQLHS). A disordered region spans residues 40 to 195 (NNTHHRSSSP…NISTLVHPTQ (156 aa)). Composition is skewed to pro residues over residues 61 to 86 (DSPP…PAPR) and 95 to 135 (PPPP…PTPK). The span at 149 to 160 (YPFTNYPFFPNF) shows a compositional bias: low complexity. Residues 203–223 (VLQALLLSFLSLCLLLLSALL) traverse the membrane as a helical segment. The tract at residues 235–446 (HHSHSHPNAR…LHSDKLKPGS (212 aa)) is disordered. Positions 314–323 (RPLPPLPRVG) are enriched in pro residues. Positions 324–369 (PPSGEFASRSSASDPSTAPPAAAEASSSSLSPSSPSASSPTLGSSP) are enriched in low complexity. The region spanning 390–823 (PKRRPQPPEP…MMGRDWNMAA (434 aa)) is the FH2 domain. Over residues 424–446 (HSPSEKSMRKSRPLHSDKLKPGS) the composition is skewed to basic and acidic residues.

This sequence belongs to the formin-like family. Class-I subfamily.

It is found in the membrane. This Oryza sativa subsp. japonica (Rice) protein is Formin-like protein 14 (FH14).